We begin with the raw amino-acid sequence, 1184 residues long: Fibulin-2 (1184 aa).

The signal sequence occupies residues 1 to 27 (MVLLWEPAGAWLALGLALALGPSVAAA). A subdomain NA (Cys-rich) region spans residues 28 to 177 (APRQDCTGVE…ELICYQLPGC (150 aa)). A n region spans residues 28–444 (APRQDCTGVE…EGSTKDLIET (417 aa)). Residues 178–444 (HGNFSDAEEG…EGSTKDLIET (267 aa)) are subdomain NB (Cys-free). N180 carries N-linked (GlcNAc...) asparagine glycosylation. 2 disordered regions span residues 221–293 (VQAG…MAVT) and 399–437 (IPPT…PEGS). Residues 224–236 (GAGGPPAALGGGS) show a composition bias toward gly residues. The span at 252 to 261 (PRPTAAAALG) shows a compositional bias: low complexity. A compositionally biased stretch (acidic residues) spans 276–288 (DSEEEEEEEEERE). S277 is modified (phosphoserine). The segment covering 423 to 436 (PNSVHSIPRSSPEG) has biased composition (polar residues). 38 disulfide bridges follow: C445-C472, C446-C479, C459-C480, C489-C518, C502-C519, C521-C545, C522-C552, C535-C553, C608-C620, C616-C629, C631-C644, C683-C693, C689-C702, C704-C717, C723-C736, C730-C745, C751-C762, C768-C781, C775-C790, C796-C808, C814-C827, C821-C836, C843-C856, C862-C875, C869-C884, C886-C899, C905-C917, C913-C926, C928-C941, C947-C956, C952-C965, C967-C980, C986-C998, C994-C1007, C1009-C1023, C1029-C1042, C1036-C1051, and C1056-C1068. Anaphylatoxin-like domains are found at residues 445–480 (CCAA…RHCC), 488–519 (SCMA…KQCC), and 521–553 (CCGL…LSCC). N-linked (GlcNAc...) asparagine glycosylation occurs at N507. The EGF-like 1; calcium-binding domain occupies 604–645 (DQDECLLLPGELCQHLCINTVGSYHCACFPGFSLQDDGRTCR). The EGF-like 2 domain maps to 679 to 718 (QPNTCKDNGPCKQVCSTVGGSAICSCFPGYAIMADGVSCE). Residues 719–763 (DINECVTDLHTCSRGEHCVNTLGSFHCYKALTCEPGYALKDGECE) form the EGF-like 3; calcium-binding domain. The EGF-like 4; calcium-binding domain maps to 764–809 (DVDECAMGTHTCQPGFLCQNTKGSFYCQARQRCMDGFLQDPEGNCV). Positions 810-857 (DINECTSLSEPCRPGFSCINTVGSYTCQRNPLICARGYHASDDGTKCV) constitute an EGF-like 5; calcium-binding domain. Residues 858-900 (DVNECETGVHRCGEGQVCHNLPGSYRCDCKAGFQRDAFGRGCI) enclose the EGF-like 6; calcium-binding domain. The EGF-like 7; calcium-binding domain occupies 901 to 942 (DVNECWASPGRLCQHTCENTLGSYRCSCASGFLLAADGKRCE). The EGF-like 8; calcium-binding domain maps to 943 to 981 (DVNECEAQRCSQECANIYGSYQCYCRQGYQLAEDGHTCT). Residues 982-1024 (DIDECAQGAGILCTFRCLNVPGSYQCACPEQGYTMTANGRSCK) enclose the EGF-like 9; calcium-binding domain. The region spanning 1025 to 1069 (DVDECALGTHNCSEAETCHNIQGSFRCLRFECPPNYVQVSKTKCE) is the EGF-like 10; calcium-binding domain. N-linked (GlcNAc...) asparagine glycosylation is present at N1035. Residues 1070-1184 (RTTCHDFLEC…MHIFFTTFAL (115 aa)) form a domain III region.

Belongs to the fibulin family. As to quaternary structure, homotrimer; disulfide-linked. Interacts with LAMA2. Interacts with FBN1 (via N-terminal domain). Forms a ternary complex with ELN and FBN1. In terms of processing, O-glycosylated with core 1 or possibly core 8 glycans. It is unsure if the O-glycosylation is on Thr-347 or Ser-348. As to expression, component of both basement membranes and other connective tissues. Expressed in heart, placenta and ovary.

The protein localises to the secreted. It localises to the extracellular space. It is found in the extracellular matrix. Its binding to fibronectin and some other ligands is calcium dependent. May act as an adapter that mediates the interaction between FBN1 and ELN. This chain is Fibulin-2 (FBLN2), found in Homo sapiens (Human).